A 377-amino-acid polypeptide reads, in one-letter code: Succinyl-diaminopimelate desuccinylase (377 aa).

A Zn(2+)-binding site is contributed by His-68. Asp-70 is a catalytic residue. A Zn(2+)-binding site is contributed by Asp-101. Catalysis depends on Glu-135, which acts as the Proton acceptor. Zn(2+) contacts are provided by Glu-136, Glu-164, and His-350.

It belongs to the peptidase M20A family. DapE subfamily. Homodimer. The cofactor is Zn(2+). Co(2+) serves as cofactor.

It catalyses the reaction N-succinyl-(2S,6S)-2,6-diaminopimelate + H2O = (2S,6S)-2,6-diaminopimelate + succinate. Its pathway is amino-acid biosynthesis; L-lysine biosynthesis via DAP pathway; LL-2,6-diaminopimelate from (S)-tetrahydrodipicolinate (succinylase route): step 3/3. In terms of biological role, catalyzes the hydrolysis of N-succinyl-L,L-diaminopimelic acid (SDAP), forming succinate and LL-2,6-diaminopimelate (DAP), an intermediate involved in the bacterial biosynthesis of lysine and meso-diaminopimelic acid, an essential component of bacterial cell walls. The sequence is that of Succinyl-diaminopimelate desuccinylase from Aliivibrio salmonicida (strain LFI1238) (Vibrio salmonicida (strain LFI1238)).